Here is a 365-residue protein sequence, read N- to C-terminus: Aminomethyltransferase (365 aa).

The protein belongs to the GcvT family. In terms of assembly, the glycine cleavage system is composed of four proteins: P, T, L and H.

It catalyses the reaction N(6)-[(R)-S(8)-aminomethyldihydrolipoyl]-L-lysyl-[protein] + (6S)-5,6,7,8-tetrahydrofolate = N(6)-[(R)-dihydrolipoyl]-L-lysyl-[protein] + (6R)-5,10-methylene-5,6,7,8-tetrahydrofolate + NH4(+). In terms of biological role, the glycine cleavage system catalyzes the degradation of glycine. The sequence is that of Aminomethyltransferase from Serratia proteamaculans (strain 568).